The primary structure comprises 473 residues: Anthocyanidin 5,3-O-glucosyltransferase (473 aa).

It belongs to the UDP-glycosyltransferase family.

It functions in the pathway pigment biosynthesis; anthocyanin biosynthesis. Its function is as follows. Sequentially catalyzes two glycosylation steps at the 5-OH and 3-OH positions of anthocyanidin. Unglycosylated anthocyanidin or anthocyanidin 5-O-glucoside, but not anthocyanidin 3-O-glucoside, can be used as glucosyl acceptor. The chain is Anthocyanidin 5,3-O-glucosyltransferase (RhGT1) from Rosa hybrid cultivar.